A 1172-amino-acid polypeptide reads, in one-letter code: Putative cadmium/zinc-transporting ATPase HMA4 (1172 aa).

Topologically, residues 1 to 93 (MALQNKEEEK…VRVNGETSFK (93 aa)) are cytoplasmic. Residues 17 to 83 (QKSYFDVLGI…ALNEARLEAN (67 aa)) form the HMA domain. Residues 94 to 115 (NKWPSPFAVVSGLLLLLSFLKF) traverse the membrane as a helical segment. Residues 116–118 (VYS) lie on the Extracellular side of the membrane. The chain crosses the membrane as a helical span at residues 119-138 (PLRWLAVAAVAAGIYPILAK). Topologically, residues 139–145 (AFASIKR) are cytoplasmic. Residues 146–166 (PRIDINILVIITVIATLAMQD) form a helical membrane-spanning segment. F167 is a topological domain (extracellular). A helical transmembrane segment spans residues 168–188 (MEAAAVVFLFTISDWLETRAS). At 189–314 (YKATSVMQSL…KTKSQRLIDK (126 aa)) the chain is on the cytoplasmic side. Residues 315-337 (CSQYYTPAIILVSACVAIVPVIM) traverse the membrane as a helical segment. Over 338–345 (KVHNLKHW) the chain is Extracellular. A helical membrane pass occupies residues 346–363 (FHLALVVLVSGCPCGLIL). Over 364–656 (STPVATFCAL…KLARRARRKV (293 aa)) the chain is Cytoplasmic. D401 acts as the 4-aspartylphosphate intermediate in catalysis. Mg(2+) is bound by residues D601 and D605. The helical transmembrane segment at 657 to 676 (VENVCLSIILKAGILALAFA) threads the bilayer. The Extracellular segment spans residues 677 to 680 (GHPL). Residues 681–700 (IWAAVLVDVGTCLLVIFNSM) form a helical membrane-spanning segment. Residues 701–1172 (LLLREKKKIG…HHHHHHHVSA (472 aa)) are Cytoplasmic-facing.

It belongs to the cation transport ATPase (P-type) (TC 3.A.3) family. Type IB subfamily.

It localises to the membrane. It carries out the reaction Zn(2+)(in) + ATP + H2O = Zn(2+)(out) + ADP + phosphate + H(+). The enzyme catalyses Cd(2+)(in) + ATP + H2O = Cd(2+)(out) + ADP + phosphate + H(+). Involved in cadmium/zinc transport. The polypeptide is Putative cadmium/zinc-transporting ATPase HMA4 (HMA4) (Arabidopsis thaliana (Mouse-ear cress)).